Reading from the N-terminus, the 196-residue chain is ATP-dependent Clp protease proteolytic subunit (196 aa).

Residue Ser-98 is the Nucleophile of the active site. The active site involves His-123.

This sequence belongs to the peptidase S14 family. As to quaternary structure, fourteen ClpP subunits assemble into 2 heptameric rings which stack back to back to give a disk-like structure with a central cavity, resembling the structure of eukaryotic proteasomes.

The protein resides in the cytoplasm. It catalyses the reaction Hydrolysis of proteins to small peptides in the presence of ATP and magnesium. alpha-casein is the usual test substrate. In the absence of ATP, only oligopeptides shorter than five residues are hydrolyzed (such as succinyl-Leu-Tyr-|-NHMec, and Leu-Tyr-Leu-|-Tyr-Trp, in which cleavage of the -Tyr-|-Leu- and -Tyr-|-Trp bonds also occurs).. In terms of biological role, cleaves peptides in various proteins in a process that requires ATP hydrolysis. Has a chymotrypsin-like activity. Plays a major role in the degradation of misfolded proteins. The chain is ATP-dependent Clp protease proteolytic subunit from Geobacillus thermodenitrificans (strain NG80-2).